The chain runs to 64 residues: uncharacterized protein (64 aa).

A disordered region spans residues 35-64 (TIRKPPIEHAAGPLGSTSRAGHRSYGGVAS).

This is an uncharacterized protein from Mycobacterium tuberculosis (strain ATCC 25618 / H37Rv).